Consider the following 427-residue polypeptide: Riboflavin transporter rft-1 (427 aa).

The Cytoplasmic segment spans residues 1–2 (MK). Residues 3-23 (TFLFTFCLVAIFGSSSWIGTN) form a helical membrane-spanning segment. Over 24–42 (SVWMELSLLTAKLPEGWNL) the chain is Extracellular. The helical transmembrane segment at 43–63 (PSYLSAIVQIACLGPLIYSII) threads the bilayer. Residues 64-73 (HKGIKMTIPT) are Cytoplasmic-facing. A helical membrane pass occupies residues 74-94 (VPLIFIFMVLACICQLGLCFF). Over 95–111 (WDDTGYIFGAIRSWPLY) the chain is Extracellular. The helical transmembrane segment at 112 to 132 (LLLFGLAIVDAISSVLFLPFM) threads the bilayer. Residues 133–139 (AQFHPSF) lie on the Cytoplasmic side of the membrane. The chain crosses the membrane as a helical span at residues 140-160 (LNAYFVGMGLSALIPSLLSLI). Topologically, residues 161 to 184 (QGTSNYWCDDNKTPHYYPPRFSVS) are extracellular. A helical membrane pass occupies residues 185–205 (MFFLINFFFTCAAVAAFLVLY). Residues 206–261 (KIGAHKNSSQVEPEPKHSIQIIQGDSTTDVNEVNTESSFQETSSIPDSSSATGARL) lie on the Cytoplasmic side of the membrane. Residues 262–282 (AFLLLTTALVNAQMNGIVTSV) traverse the membrane as a helical segment. Residues 283 to 297 (QSYATLVYSQNTYHY) lie on the Extracellular side of the membrane. Residues 298–318 (AVTLSNVISPLASYLQFFVKI) form a helical membrane-spanning segment. The Cytoplasmic segment spans residues 319-322 (RSLP). The chain crosses the membrane as a helical span at residues 323–343 (ILAFLTLCSSLTTAVIIYLAA). Topologically, residues 344-353 (LSPNWIFNSE) are extracellular. The helical transmembrane segment at 354 to 374 (TAGTIISIASSLIAAGLHSYL) threads the bilayer. The Cytoplasmic portion of the chain corresponds to 375-391 (RVMFAALLREGNQKESR). The helical transmembrane segment at 392–412 (LFWCGAFIQIGSFTGSAIMFP) threads the bilayer. Topologically, residues 413–427 (LVNVWKLFHSAPSCR) are extracellular.

This sequence belongs to the riboflavin transporter family. In terms of tissue distribution, expressed in intestine.

Its subcellular location is the cell membrane. It carries out the reaction riboflavin(in) = riboflavin(out). Activity is strongly inhibited by riboflavin analogs, such as lumiflavin and lumichrome. In terms of biological role, riboflavin transporter. Riboflavin transport is Na(+)-independent but pH-sensitive. This chain is Riboflavin transporter rft-1, found in Caenorhabditis elegans.